We begin with the raw amino-acid sequence, 235 residues long: Carbohydrate deacetylase (235 aa).

Mg(2+)-binding residues include histidine 61 and histidine 124.

The protein belongs to the YdjC deacetylase family. Mg(2+) serves as cofactor.

In terms of biological role, probably catalyzes the deacetylation of acetylated carbohydrates an important step in the degradation of oligosaccharides. In Bacillus cereus (strain B4264), this protein is Carbohydrate deacetylase.